Reading from the N-terminus, the 375-residue chain is tRNA-specific 2-thiouridylase MnmA (375 aa).

ATP is bound by residues 12 to 19 and methionine 38; that span reads GMSGGVDS. Residues 98-100 are interaction with target base in tRNA; it reads NPD. The active-site Nucleophile is the cysteine 103. Cysteine 103 and cysteine 200 are oxidised to a cystine. Glycine 127 is an ATP binding site. Residues 150–152 form an interaction with tRNA region; sequence KDQ. The active-site Cysteine persulfide intermediate is cysteine 200. The interval 312 to 313 is interaction with tRNA; the sequence is RY.

Belongs to the MnmA/TRMU family.

The protein localises to the cytoplasm. The enzyme catalyses S-sulfanyl-L-cysteinyl-[protein] + uridine(34) in tRNA + AH2 + ATP = 2-thiouridine(34) in tRNA + L-cysteinyl-[protein] + A + AMP + diphosphate + H(+). Its function is as follows. Catalyzes the 2-thiolation of uridine at the wobble position (U34) of tRNA, leading to the formation of s(2)U34. This chain is tRNA-specific 2-thiouridylase MnmA, found in Ligilactobacillus salivarius (strain UCC118) (Lactobacillus salivarius).